Consider the following 503-residue polypeptide: Glycosyltransferase family 92 protein ZK381.2 (503 aa).

A helical membrane pass occupies residues 7 to 27 (YKPCLLIILIFNSVILLFILI). Positions 156-441 (KPVIICISPQ…FKCYFDSFYK (286 aa)) constitute a GT92 domain.

The protein belongs to the glycosyltransferase 92 family.

It localises to the membrane. The sequence is that of Glycosyltransferase family 92 protein ZK381.2 from Caenorhabditis elegans.